The primary structure comprises 165 residues: uncharacterized protein (165 aa).

The tract at residues 28-97 (EASAPSGNPP…QLSQSLEVPT (70 aa)) is disordered. The segment covering 34–47 (GNPPPPPPPPPPPI) has biased composition (pro residues). Composition is skewed to polar residues over residues 54 to 66 (KSLN…QLDN) and 73 to 94 (AQHT…QSLE).

This is an uncharacterized protein from Rickettsia prowazekii (strain Madrid E).